A 696-amino-acid chain; its full sequence is Probable transporter efuK (696 aa).

The disordered stretch occupies residues 603–642 (SLNGGKMQGASDAKSKVEQGQRAMRKQDEQNGSKWEPVFF). The span at 615 to 633 (AKSKVEQGQRAMRKQDEQN) shows a compositional bias: basic and acidic residues.

Belongs to the OSBP family.

In terms of biological role, probable transporter; part of the gene cluster that mediates the biosynthesis of enfumafungin, a glycosylated fernene-type triterpenoid with potent antifungal activity, mediated by its interaction with beta-1,3-glucan synthase and the fungal cell wall. Might be involved in transport of enfumafungin to and across organelle membranes. The polypeptide is Probable transporter efuK (Hormonema carpetanum).